Reading from the N-terminus, the 357-residue chain is Aspartate-semialdehyde dehydrogenase (357 aa).

Residues Thr12, Gly13, Thr14, Val15, Ser37, Ser40, Leu84, and Asp85 each contribute to the NADP(+) site. Catalysis depends on Cys151, which acts as the Acyl-thioester intermediate. An NADP(+)-binding site is contributed by Gly183. His247 acts as the Proton acceptor in catalysis. The residue at position 323 (Ser323) is a Phosphoserine. Asn335 contributes to the NADP(+) binding site.

It belongs to the aspartate-semialdehyde dehydrogenase family.

The protein localises to the cytoplasm. Its subcellular location is the cytosol. The protein resides in the nucleus. It carries out the reaction L-aspartate 4-semialdehyde + phosphate + NADP(+) = 4-phospho-L-aspartate + NADPH + H(+). Its pathway is amino-acid biosynthesis; L-methionine biosynthesis via de novo pathway; L-homoserine from L-aspartate: step 2/3. It participates in amino-acid biosynthesis; L-threonine biosynthesis; L-threonine from L-aspartate: step 2/5. Its function is as follows. Catalyzes the NADPH-dependent formation of L-aspartate 4-semialdehyde (L-ASA) by the reductive dephosphorylation of 4-phospho-L-aspartate. Mediates the second step in the biosynthesis of amino acids that derive from aspartate (the aspartate family of amino acids), including methioinine and threonine, the latter of which is a precursor to isoleucine. In Schizosaccharomyces pombe (strain 972 / ATCC 24843) (Fission yeast), this protein is Aspartate-semialdehyde dehydrogenase.